The primary structure comprises 261 residues: Ribosomal RNA small subunit methyltransferase J (261 aa).

S-adenosyl-L-methionine is bound by residues 109-110 (RD), 125-126 (ER), and Asp179.

This sequence belongs to the methyltransferase superfamily. RsmJ family.

The protein resides in the cytoplasm. The catalysed reaction is guanosine(1516) in 16S rRNA + S-adenosyl-L-methionine = N(2)-methylguanosine(1516) in 16S rRNA + S-adenosyl-L-homocysteine + H(+). Functionally, specifically methylates the guanosine in position 1516 of 16S rRNA. This chain is Ribosomal RNA small subunit methyltransferase J, found in Pseudomonas paraeruginosa (strain DSM 24068 / PA7) (Pseudomonas aeruginosa (strain PA7)).